Reading from the N-terminus, the 616-residue chain is Dihydroxy-acid dehydratase (616 aa).

Asp81 is a Mg(2+) binding site. Cys122 contacts [2Fe-2S] cluster. Mg(2+) contacts are provided by Asp123 and Lys124. An N6-carboxylysine modification is found at Lys124. Cys195 lines the [2Fe-2S] cluster pocket. Glu491 is a binding site for Mg(2+). Ser517 serves as the catalytic Proton acceptor.

The protein belongs to the IlvD/Edd family. In terms of assembly, homodimer. It depends on [2Fe-2S] cluster as a cofactor. Requires Mg(2+) as cofactor.

It catalyses the reaction (2R)-2,3-dihydroxy-3-methylbutanoate = 3-methyl-2-oxobutanoate + H2O. It carries out the reaction (2R,3R)-2,3-dihydroxy-3-methylpentanoate = (S)-3-methyl-2-oxopentanoate + H2O. Its pathway is amino-acid biosynthesis; L-isoleucine biosynthesis; L-isoleucine from 2-oxobutanoate: step 3/4. It functions in the pathway amino-acid biosynthesis; L-valine biosynthesis; L-valine from pyruvate: step 3/4. Functions in the biosynthesis of branched-chain amino acids. Catalyzes the dehydration of (2R,3R)-2,3-dihydroxy-3-methylpentanoate (2,3-dihydroxy-3-methylvalerate) into 2-oxo-3-methylpentanoate (2-oxo-3-methylvalerate) and of (2R)-2,3-dihydroxy-3-methylbutanoate (2,3-dihydroxyisovalerate) into 2-oxo-3-methylbutanoate (2-oxoisovalerate), the penultimate precursor to L-isoleucine and L-valine, respectively. This chain is Dihydroxy-acid dehydratase, found in Yersinia pseudotuberculosis serotype O:3 (strain YPIII).